Here is a 671-residue protein sequence, read N- to C-terminus: UvrABC system protein B (671 aa).

The Helicase ATP-binding domain occupies 25 to 412 (EGIEAGLAHQ…AGRVVEQVVR (388 aa)). Residue 38 to 45 (GVTGSGKT) participates in ATP binding. The Beta-hairpin signature appears at 91 to 114 (YYDYYQPEAYVPSSDTFIEKDASI). A Helicase C-terminal domain is found at 429–582 (QVDDLLSEIT…QIAFNLANGI (154 aa)). The interval 601 to 623 (PGSRSKKRKGMAKAAEENARYEN) is disordered. A compositionally biased stretch (basic and acidic residues) spans 614-623 (AAEENARYEN). The 36-residue stretch at 632-667 (TKRIRQLEEKMYQLARDLEFEAAAQMRDEITKLRER) folds into the UVR domain.

The protein belongs to the UvrB family. Forms a heterotetramer with UvrA during the search for lesions. Interacts with UvrC in an incision complex.

It is found in the cytoplasm. Functionally, the UvrABC repair system catalyzes the recognition and processing of DNA lesions. A damage recognition complex composed of 2 UvrA and 2 UvrB subunits scans DNA for abnormalities. Upon binding of the UvrA(2)B(2) complex to a putative damaged site, the DNA wraps around one UvrB monomer. DNA wrap is dependent on ATP binding by UvrB and probably causes local melting of the DNA helix, facilitating insertion of UvrB beta-hairpin between the DNA strands. Then UvrB probes one DNA strand for the presence of a lesion. If a lesion is found the UvrA subunits dissociate and the UvrB-DNA preincision complex is formed. This complex is subsequently bound by UvrC and the second UvrB is released. If no lesion is found, the DNA wraps around the other UvrB subunit that will check the other stand for damage. The sequence is that of UvrABC system protein B from Pseudomonas fluorescens (strain ATCC BAA-477 / NRRL B-23932 / Pf-5).